The chain runs to 599 residues: 2-succinyl-5-enolpyruvyl-6-hydroxy-3-cyclohexene-1-carboxylate synthase (599 aa).

The segment covering 1–21 (MTSENPLDPNNAYAAADDAPL) has biased composition (low complexity). Residues 1–35 (MTSENPLDPNNAYAAADDAPLSEGDPTGAPADSGS) form a disordered region.

Belongs to the TPP enzyme family. MenD subfamily. In terms of assembly, homodimer. It depends on Mg(2+) as a cofactor. Mn(2+) is required as a cofactor. Thiamine diphosphate serves as cofactor.

The catalysed reaction is isochorismate + 2-oxoglutarate + H(+) = 5-enolpyruvoyl-6-hydroxy-2-succinyl-cyclohex-3-ene-1-carboxylate + CO2. It functions in the pathway quinol/quinone metabolism; 1,4-dihydroxy-2-naphthoate biosynthesis; 1,4-dihydroxy-2-naphthoate from chorismate: step 2/7. It participates in quinol/quinone metabolism; menaquinone biosynthesis. Its function is as follows. Catalyzes the thiamine diphosphate-dependent decarboxylation of 2-oxoglutarate and the subsequent addition of the resulting succinic semialdehyde-thiamine pyrophosphate anion to isochorismate to yield 2-succinyl-5-enolpyruvyl-6-hydroxy-3-cyclohexene-1-carboxylate (SEPHCHC). The polypeptide is 2-succinyl-5-enolpyruvyl-6-hydroxy-3-cyclohexene-1-carboxylate synthase (Arthrobacter sp. (strain FB24)).